We begin with the raw amino-acid sequence, 152 residues long: Nucleoside diphosphate kinase A (152 aa).

ATP contacts are provided by lysine 12, phenylalanine 60, arginine 88, and threonine 94. Lysine 100 is covalently cross-linked (Glycyl lysine isopeptide (Lys-Gly) (interchain with G-Cter in ubiquitin)). Residues arginine 105 and asparagine 115 each coordinate ATP. The active-site Pros-phosphohistidine intermediate is histidine 118. Phosphoserine occurs at positions 120, 122, and 125.

The protein belongs to the NDK family. In terms of assembly, hexamer of two different chains: An and B (A6, A5B, A4B2, A3B3, A2B4, AB5, B6). Interacts with PRUNE1. Component of the SET complex, composed of at least ANP32A, APEX1, HMGB2, NME1, SET and TREX1. Within this complex, interacts directly with SET. Also interacts with TREX1, but only following translocation to the nucleus. It depends on Mg(2+) as a cofactor.

The protein resides in the cytoplasm. It is found in the nucleus. The enzyme catalyses a 2'-deoxyribonucleoside 5'-diphosphate + ATP = a 2'-deoxyribonucleoside 5'-triphosphate + ADP. The catalysed reaction is a ribonucleoside 5'-diphosphate + ATP = a ribonucleoside 5'-triphosphate + ADP. Autophosphorylation at His-118 increases serine/threonine protein kinase activity of the enzyme. Interaction with the SET complex inhibits exonuclease activity. In terms of biological role, major role in the synthesis of nucleoside triphosphates other than ATP. The ATP gamma phosphate is transferred to the NDP beta phosphate via a ping-pong mechanism, using a phosphorylated active-site intermediate. Possesses nucleoside-diphosphate kinase, serine/threonine-specific protein kinase, geranyl and farnesyl pyrophosphate kinase, histidine protein kinase and 3'-5' exonuclease activities. Involved in cell proliferation, differentiation and development, signal transduction, G protein-coupled receptor endocytosis, and gene expression. Required for neural development including neural patterning and cell fate determination. During GZMA-mediated cell death, works in concert with TREX1. NME1 nicks one strand of DNA and TREX1 removes bases from the free 3' end to enhance DNA damage and prevent DNA end reannealing and rapid repair. The protein is Nucleoside diphosphate kinase A (NME1) of Canis lupus familiaris (Dog).